The chain runs to 243 residues: Triosephosphate isomerase (243 aa).

9–11 (NWK) is a substrate binding site. The active-site Electrophile is the His-98. Catalysis depends on Glu-167, which acts as the Proton acceptor. Substrate-binding positions include Gly-173, Ser-205, and 226-227 (GG).

It belongs to the triosephosphate isomerase family. As to quaternary structure, homodimer.

It localises to the cytoplasm. It catalyses the reaction D-glyceraldehyde 3-phosphate = dihydroxyacetone phosphate. The protein operates within carbohydrate biosynthesis; gluconeogenesis. It functions in the pathway carbohydrate degradation; glycolysis; D-glyceraldehyde 3-phosphate from glycerone phosphate: step 1/1. In terms of biological role, involved in the gluconeogenesis. Catalyzes stereospecifically the conversion of dihydroxyacetone phosphate (DHAP) to D-glyceraldehyde-3-phosphate (G3P). The polypeptide is Triosephosphate isomerase (Mesomycoplasma hyorhinis (Mycoplasma hyorhinis)).